The sequence spans 181 residues: ATP synthase subunit delta (181 aa).

It belongs to the ATPase delta chain family. F-type ATPases have 2 components, F(1) - the catalytic core - and F(0) - the membrane proton channel. F(1) has five subunits: alpha(3), beta(3), gamma(1), delta(1), epsilon(1). F(0) has three main subunits: a(1), b(2) and c(10-14). The alpha and beta chains form an alternating ring which encloses part of the gamma chain. F(1) is attached to F(0) by a central stalk formed by the gamma and epsilon chains, while a peripheral stalk is formed by the delta and b chains.

The protein resides in the cell membrane. In terms of biological role, f(1)F(0) ATP synthase produces ATP from ADP in the presence of a proton or sodium gradient. F-type ATPases consist of two structural domains, F(1) containing the extramembraneous catalytic core and F(0) containing the membrane proton channel, linked together by a central stalk and a peripheral stalk. During catalysis, ATP synthesis in the catalytic domain of F(1) is coupled via a rotary mechanism of the central stalk subunits to proton translocation. Functionally, this protein is part of the stalk that links CF(0) to CF(1). It either transmits conformational changes from CF(0) to CF(1) or is implicated in proton conduction. The chain is ATP synthase subunit delta from Oceanobacillus iheyensis (strain DSM 14371 / CIP 107618 / JCM 11309 / KCTC 3954 / HTE831).